The chain runs to 735 residues: Muskelin (735 aa).

Ala2 carries the N-acetylalanine modification. Positions 172 to 204 (REQEAIRLCLKHFRQHNYTEAFESLQKKTKIAL) constitute a LisH domain. A CTLH domain is found at 206–258 (HPMLTDMHDKLVLKGDFDACEELIEKAVNDGLFNQYISQQEYKPRWSQIIPKS). Kelch repeat units lie at residues 284–330 (TVYL…SCHK), 339–391 (QIYT…FDHQ), 400–458 (MIYT…SRIG), 469–515 (CLYV…TGFT), 526–578 (EIHV…SLQE), and 597–651 (VHYL…AQMD). Positions 701 to 735 (DHTYAQRTQLFDTLVNFFPDSMTPPKGNLVDLITL) are important for location in the cytosol.

As to quaternary structure, homodimer; may form higher oligomers. Identified in the CTLH complex that contains GID4, RANBP9 and/or RANBP10, MKLN1, MAEA, RMND5A (or alternatively its paralog RMND5B), GID8, ARMC8, WDR26 and YPEL5. Within this complex, MAEA, RMND5A (or alternatively its paralog RMND5B), GID8, WDR26, and RANBP9 and/or RANBP10 form the catalytic core, while GID4, MKLN1, ARMC8 and YPEL5 have ancillary roles. Interacts with RANBP9. Part of a complex consisting of RANBP9, MKLN1 and GID8. Interacts with GABRA1. Interacts with the C-terminal tail of PTGER3. In terms of tissue distribution, detected in brain, especially in hippocampus and cerebellum (at protein level).

The protein resides in the cytoplasm. It is found in the cytosol. Its subcellular location is the nucleus. The protein localises to the nucleoplasm. It localises to the cell projection. The protein resides in the ruffle. It is found in the cell cortex. Its subcellular location is the synapse. The protein localises to the postsynapse. Functionally, component of the CTLH E3 ubiquitin-protein ligase complex that selectively accepts ubiquitin from UBE2H and mediates ubiquitination and subsequent proteasomal degradation of the transcription factor HBP1. Required for internalization of the GABA receptor GABRA1 from the cell membrane via endosomes and subsequent GABRA1 degradation. Acts as a mediator of cell spreading and cytoskeletal responses to the extracellular matrix component THBS1. The chain is Muskelin (Mkln1) from Mus musculus (Mouse).